We begin with the raw amino-acid sequence, 715 residues long: Fatty acid oxidation complex subunit alpha (715 aa).

The tract at residues 1-190 (MDMTSAFTLN…RVGLVDEVVP (190 aa)) is enoyl-CoA hydratase. A 3-hydroxyacyl-CoA dehydrogenase region spans residues 306-715 (GPLASVGVLG…WNSGETDLKE (410 aa)).

The protein in the N-terminal section; belongs to the enoyl-CoA hydratase/isomerase family. This sequence in the central section; belongs to the 3-hydroxyacyl-CoA dehydrogenase family. Heterotetramer of two alpha chains (FadJ) and two beta chains (FadI).

It localises to the cytoplasm. It catalyses the reaction a (3S)-3-hydroxyacyl-CoA = a (2E)-enoyl-CoA + H2O. The catalysed reaction is a 4-saturated-(3S)-3-hydroxyacyl-CoA = a (3E)-enoyl-CoA + H2O. The enzyme catalyses a (3S)-3-hydroxyacyl-CoA + NAD(+) = a 3-oxoacyl-CoA + NADH + H(+). It carries out the reaction (3S)-3-hydroxybutanoyl-CoA = (3R)-3-hydroxybutanoyl-CoA. The protein operates within lipid metabolism; fatty acid beta-oxidation. Its function is as follows. Catalyzes the formation of a hydroxyacyl-CoA by addition of water on enoyl-CoA. Also exhibits 3-hydroxyacyl-CoA epimerase and 3-hydroxyacyl-CoA dehydrogenase activities. The sequence is that of Fatty acid oxidation complex subunit alpha from Citrobacter koseri (strain ATCC BAA-895 / CDC 4225-83 / SGSC4696).